Here is a 305-residue protein sequence, read N- to C-terminus: MAQVKRIRRNVSGIILLDKPLGFTSNAALQKVRWLLNAEKAGHTGSLDPLATGVLPLCFGEATKFSQYLLDSDKGYETVMQMGQTTNTGDAEGEVLQTRDVTVGRADIEALLPRFRGPISQIPPMYSALKRDGQPLYKLARAGEVVEREARSVTINRLELLECEGTRARLSVGCSKGTYIRTLVEDIGEALGCGAYVAELRRTQAGPFALAQTVTLEELEQAHADGGNEALDRFLMPSDSGLQDWPMVSLSEHSAFYWLHGQAVRAPDAPQFGMVRVQDHNARFIGIGEVSEDGRIAPRRLIRSE.

The active-site Nucleophile is aspartate 48.

This sequence belongs to the pseudouridine synthase TruB family. Type 1 subfamily.

It carries out the reaction uridine(55) in tRNA = pseudouridine(55) in tRNA. Functionally, responsible for synthesis of pseudouridine from uracil-55 in the psi GC loop of transfer RNAs. This Pseudomonas putida (strain GB-1) protein is tRNA pseudouridine synthase B.